The primary structure comprises 199 residues: Signal peptidase complex subunit 2 (199 aa).

Over 1 to 49 the chain is Cytoplasmic; that stretch reads MGKKDEKSQQGEELVKVNKWDGSAVKHALDDAVKTCLLGDRPQLKEQFG. Residues 50-72 form a helical membrane-spanning segment; that stretch reads LVNTRLALCALAVSVAIMAHAWD. Topologically, residues 73–81 are lumenal; that stretch reads FTHPFPESR. A helical transmembrane segment spans residues 82–104; it reads PVLLFSVLAYFALLGILTLHSSF. At 105–199 the chain is on the cytoplasmic side; it reads REKGTFAVAL…KKNASSLSSN (95 aa).

This sequence belongs to the SPCS2 family. Component of the signal peptidase complex (SPC) composed of a catalytic subunit twr/SEC11 and three accessory subunits Spase12/SPCS1, Spase25/SPCS2 and Spase22-23/SPCS3. The complex induces a local thinning of the ER membrane which is used to measure the length of the signal peptide (SP) h-region of protein substrates. This ensures the selectivity of the complex towards h-regions shorter than 18-20 amino acids.

It is found in the endoplasmic reticulum membrane. Functionally, component of the signal peptidase complex (SPC) which catalyzes the cleavage of N-terminal signal sequences from nascent proteins as they are translocated into the lumen of the endoplasmic reticulum. Enhances the enzymatic activity of SPC and facilitates the interactions between different components of the translocation site. This Drosophila melanogaster (Fruit fly) protein is Signal peptidase complex subunit 2 (Spase25).